A 278-amino-acid chain; its full sequence is HTH-type transcriptional regulator HdfR (278 aa).

The 58-residue stretch at 1-58 (MDTELLKTFLEVSRTRHFGRAAEALYLTQSAVSFRIRQLENQLGVNLFTRHRNNIRLT) folds into the HTH lysR-type domain. The segment at residues 18 to 37 (FGRAAEALYLTQSAVSFRIR) is a DNA-binding region (H-T-H motif).

It belongs to the LysR transcriptional regulatory family.

Its function is as follows. Negatively regulates the transcription of the flagellar master operon flhDC by binding to the upstream region of the operon. This chain is HTH-type transcriptional regulator HdfR, found in Salmonella schwarzengrund (strain CVM19633).